The primary structure comprises 570 residues: Formate--tetrahydrofolate ligase (570 aa).

65–72 (TPFGEGKT) lines the ATP pocket.

Belongs to the formate--tetrahydrofolate ligase family.

The catalysed reaction is (6S)-5,6,7,8-tetrahydrofolate + formate + ATP = (6R)-10-formyltetrahydrofolate + ADP + phosphate. Its pathway is one-carbon metabolism; tetrahydrofolate interconversion. This Shewanella woodyi (strain ATCC 51908 / MS32) protein is Formate--tetrahydrofolate ligase.